The following is a 306-amino-acid chain: Latrophilin receptor-like protein A (306 aa).

Residues 1-15 (MPSQLLNTVLSYLTD) are Extracellular-facing. A helical transmembrane segment spans residues 16 to 36 (ILLSLSIVGSFLTIFTFMLYP). The Cytoplasmic segment spans residues 37 to 41 (KLRSY). A helical transmembrane segment spans residues 42–62 (PIKLIIYLCMSIVFSLFFFEI). Residues 63 to 70 (SFRSSNSL) are Extracellular-facing. Residues 71–91 (FCIPAAILVHYFFLANFFWTF) traverse the membrane as a helical segment. At 92-113 (SVSFNFFQMIVKRNRDSEFYER) the chain is on the cytoplasmic side. The helical transmembrane segment at 114–134 (YYHLISWGIPFIIIIFCAAFK) threads the bilayer. Residues 135-152 (KYVDRGGFCYLEDQYSVY) are Extracellular-facing. A helical transmembrane segment spans residues 153-173 (FGFFMPGVIIVCSNICIYVFV). Residues 174–196 (AKEIYKTLRHTPTQKRQTVKEFR) lie on the Cytoplasmic side of the membrane. Residues 197 to 217 (VYFSIFVSIGSSWIFGFIYMF) traverse the membrane as a helical segment. The Extracellular segment spans residues 218–222 (SDSNS). The helical transmembrane segment at 223–243 (IIGYIFLILFSISTSLQGFFI) threads the bilayer. Residues 244-306 (FISYCLNYKV…TTTTTNVYSA (63 aa)) are Cytoplasmic-facing. The disordered stretch occupies residues 279–306 (TTQSGPTGTTDSSSTMTSTTTTTNVYSA).

Belongs to the G-protein coupled receptor 2 family. LN-TM7 subfamily.

The protein localises to the membrane. The protein is Latrophilin receptor-like protein A (lrlA) of Dictyostelium discoideum (Social amoeba).